A 297-amino-acid chain; its full sequence is Succinate dehydrogenase [ubiquinone] iron-sulfur subunit, mitochondrial (297 aa).

Residues 47 to 140 (KKFEIYRWNP…SLKVYPLPHM (94 aa)) enclose the 2Fe-2S ferredoxin-type domain. Positions 100, 105, 108, and 120 each coordinate [2Fe-2S] cluster. The 4Fe-4S ferredoxin-type domain maps to 185 to 215 (DRSKLDGLYECILCACCSTSCPSYWWNAEKY). [4Fe-4S] cluster contacts are provided by Cys195, Cys198, and Cys201. [3Fe-4S] cluster is bound at residue Cys205. Position 210 (Trp210) interacts with a ubiquinone. 2 residues coordinate [3Fe-4S] cluster: Cys252 and Cys258. A [4Fe-4S] cluster-binding site is contributed by Cys262.

This sequence belongs to the succinate dehydrogenase/fumarate reductase iron-sulfur protein family. In terms of assembly, component of complex II composed of four subunits: a flavoprotein (FP), an iron-sulfur protein (IP), and a cytochrome b composed of a large and a small subunit. It depends on [2Fe-2S] cluster as a cofactor. Requires [3Fe-4S] cluster as cofactor. [4Fe-4S] cluster is required as a cofactor. In terms of tissue distribution, most abundant in the adult thorax and low in abdominal tissues.

The protein resides in the mitochondrion inner membrane. The enzyme catalyses a quinone + succinate = fumarate + a quinol. It participates in carbohydrate metabolism; tricarboxylic acid cycle; fumarate from succinate (eukaryal route): step 1/1. Iron-sulfur protein (IP) subunit of succinate dehydrogenase (SDH) that is involved in complex II of the mitochondrial electron transport chain and is responsible for transferring electrons from succinate to ubiquinone (coenzyme Q). This is Succinate dehydrogenase [ubiquinone] iron-sulfur subunit, mitochondrial (SdhB) from Drosophila melanogaster (Fruit fly).